The primary structure comprises 355 residues: Holliday junction branch migration complex subunit RuvB (355 aa).

Positions 4 to 190 (TDKLAAERII…FGIVARLEFY (187 aa)) are large ATPase domain (RuvB-L). Residues Leu29, Arg30, Gly71, Lys74, Thr75, Thr76, 137 to 139 (EDY), Arg180, Tyr190, and Arg227 contribute to the ATP site. Thr75 contacts Mg(2+). A small ATPAse domain (RuvB-S) region spans residues 191 to 261 (DADQLARIVR…VADAALAMLD (71 aa)). The head domain (RuvB-H) stretch occupies residues 264–355 (PVGFDLMDRK…RGMWDTPAGK (92 aa)). DNA-binding residues include Arg300, Arg319, and Arg324.

This sequence belongs to the RuvB family. As to quaternary structure, homohexamer. Forms an RuvA(8)-RuvB(12)-Holliday junction (HJ) complex. HJ DNA is sandwiched between 2 RuvA tetramers; dsDNA enters through RuvA and exits via RuvB. An RuvB hexamer assembles on each DNA strand where it exits the tetramer. Each RuvB hexamer is contacted by two RuvA subunits (via domain III) on 2 adjacent RuvB subunits; this complex drives branch migration. In the full resolvosome a probable DNA-RuvA(4)-RuvB(12)-RuvC(2) complex forms which resolves the HJ.

It localises to the cytoplasm. The enzyme catalyses ATP + H2O = ADP + phosphate + H(+). The RuvA-RuvB-RuvC complex processes Holliday junction (HJ) DNA during genetic recombination and DNA repair, while the RuvA-RuvB complex plays an important role in the rescue of blocked DNA replication forks via replication fork reversal (RFR). RuvA specifically binds to HJ cruciform DNA, conferring on it an open structure. The RuvB hexamer acts as an ATP-dependent pump, pulling dsDNA into and through the RuvAB complex. RuvB forms 2 homohexamers on either side of HJ DNA bound by 1 or 2 RuvA tetramers; 4 subunits per hexamer contact DNA at a time. Coordinated motions by a converter formed by DNA-disengaged RuvB subunits stimulates ATP hydrolysis and nucleotide exchange. Immobilization of the converter enables RuvB to convert the ATP-contained energy into a lever motion, pulling 2 nucleotides of DNA out of the RuvA tetramer per ATP hydrolyzed, thus driving DNA branch migration. The RuvB motors rotate together with the DNA substrate, which together with the progressing nucleotide cycle form the mechanistic basis for DNA recombination by continuous HJ branch migration. Branch migration allows RuvC to scan DNA until it finds its consensus sequence, where it cleaves and resolves cruciform DNA. This is Holliday junction branch migration complex subunit RuvB from Burkholderia ambifaria (strain ATCC BAA-244 / DSM 16087 / CCUG 44356 / LMG 19182 / AMMD) (Burkholderia cepacia (strain AMMD)).